The sequence spans 359 residues: Peptide chain release factor 1 (359 aa).

Glutamine 235 carries the N5-methylglutamine modification. The tract at residues 284 to 311 (KAESERSASRKNQVGSGDRSERIRTYNF) is disordered.

The protein belongs to the prokaryotic/mitochondrial release factor family. In terms of processing, methylated by PrmC. Methylation increases the termination efficiency of RF1.

It is found in the cytoplasm. In terms of biological role, peptide chain release factor 1 directs the termination of translation in response to the peptide chain termination codons UAG and UAA. In Bartonella quintana (strain Toulouse) (Rochalimaea quintana), this protein is Peptide chain release factor 1.